Here is a 432-residue protein sequence, read N- to C-terminus: UPF0761 membrane protein Cag_0935 (432 aa).

6 helical membrane passes run 52–72, 108–128, 148–168, 190–210, 220–240, and 254–274; these read LLSI…FEVF, NIPL…LSTV, FTLY…SLAA, LLAL…YMLV, AFAG…WFLF, and ALSV…VVLV.

The protein belongs to the UPF0761 family.

Its subcellular location is the cell inner membrane. This is UPF0761 membrane protein Cag_0935 from Chlorobium chlorochromatii (strain CaD3).